A 347-amino-acid polypeptide reads, in one-letter code: Anthranilate phosphoribosyltransferase (347 aa).

Residues Gly-86, 89–90 (GD), Thr-94, 96–99 (NIST), 114–122 (KHGNRSVSS), and Ser-126 each bind 5-phospho-alpha-D-ribose 1-diphosphate. Gly-86 serves as a coordination point for anthranilate. Ser-98 lines the Mg(2+) pocket. Position 117 (Asn-117) interacts with anthranilate. Arg-172 serves as a coordination point for anthranilate. Residues Asp-230 and Glu-231 each contribute to the Mg(2+) site.

The protein belongs to the anthranilate phosphoribosyltransferase family. Homodimer. The cofactor is Mg(2+).

The enzyme catalyses N-(5-phospho-beta-D-ribosyl)anthranilate + diphosphate = 5-phospho-alpha-D-ribose 1-diphosphate + anthranilate. The protein operates within amino-acid biosynthesis; L-tryptophan biosynthesis; L-tryptophan from chorismate: step 2/5. Functionally, catalyzes the transfer of the phosphoribosyl group of 5-phosphorylribose-1-pyrophosphate (PRPP) to anthranilate to yield N-(5'-phosphoribosyl)-anthranilate (PRA). In Shewanella frigidimarina (strain NCIMB 400), this protein is Anthranilate phosphoribosyltransferase.